We begin with the raw amino-acid sequence, 395 residues long: Elongation factor Ts, mitochondrial (395 aa).

A mitochondrion-targeting transit peptide spans Met1–Phe63.

It belongs to the EF-Ts family.

The protein resides in the mitochondrion. Functionally, associates with the EF-Tu.GDP complex and induces the exchange of GDP to GTP. It remains bound to the aminoacyl-tRNA.EF-Tu.GTP complex up to the GTP hydrolysis stage on the ribosome. This chain is Elongation factor Ts, mitochondrial, found in Arabidopsis thaliana (Mouse-ear cress).